The primary structure comprises 78 residues: CDC42 small effector protein 1 (78 aa).

Residues C10 and C11 are each lipidated (S-palmitoyl cysteine). The 14-residue stretch at 30-43 (IGEPMNFVHLTHIG) folds into the CRIB domain.

It belongs to the CDC42SE/SPEC family.

The protein resides in the cytoplasm. Its subcellular location is the cytoskeleton. The protein localises to the cell membrane. Its function is as follows. Probably involved in the organization of the actin cytoskeleton by acting downstream of CDC42, inducing actin filament assembly. In Gallus gallus (Chicken), this protein is CDC42 small effector protein 1 (CDC42SE1).